We begin with the raw amino-acid sequence, 464 residues long: MSTAALVEGKIVQCIGAVIDVEFPRESMPKIYDALILDGSELTLEVQQQLGDGVVRTICLGASDGLRRGLTVKNTAKPISVPVGKPTLGRIMDVLGRPIDEAGPIESEVTRSIHQKAPAFDELSPSTELLETGIKVIDLICPFAKGGKVGLFGGAGVGKTVNMMELINNIAKEHGGYSVFAGVGERTREGNDFYHEMKDSNVLDKVALVYGQMNEPPGNRLRVALTGLTMAEHFRDEGLDVLFFVDNIYRFTLAGTEVSALLGRMPSAVGYQPTLAEEMGKLQERITSTKKGSITSVQAVYVPADDLTDPSPATTFGHLDATVVLSRDIASLGIYPAVDPLDSTSRQIDPNVIGEEHYSITRRVQQTLQRYKELRDIIAILGMDELSPEDKLSVARARKIQRFLSQPFHVAEVFTGSPGKYVPLKETIRGFKMIVDGECDHLPEQAFYMVGTIDEAFEKAKKIS.

153–160 (GGAGVGKT) serves as a coordination point for ATP.

Belongs to the ATPase alpha/beta chains family. As to quaternary structure, F-type ATPases have 2 components, CF(1) - the catalytic core - and CF(0) - the membrane proton channel. CF(1) has five subunits: alpha(3), beta(3), gamma(1), delta(1), epsilon(1). CF(0) has three main subunits: a(1), b(2) and c(9-12). The alpha and beta chains form an alternating ring which encloses part of the gamma chain. CF(1) is attached to CF(0) by a central stalk formed by the gamma and epsilon chains, while a peripheral stalk is formed by the delta and b chains.

It localises to the cell inner membrane. The catalysed reaction is ATP + H2O + 4 H(+)(in) = ADP + phosphate + 5 H(+)(out). In terms of biological role, produces ATP from ADP in the presence of a proton gradient across the membrane. The catalytic sites are hosted primarily by the beta subunits. The polypeptide is ATP synthase subunit beta (Burkholderia ambifaria (strain ATCC BAA-244 / DSM 16087 / CCUG 44356 / LMG 19182 / AMMD) (Burkholderia cepacia (strain AMMD))).